The following is a 358-amino-acid chain: Trace amine-associated receptor 7a (358 aa).

Over 1–47 (MDKLVDNFLSGQSRTMSEDLLSASSPQLCYENLNGSCIRSPYSPGPR) the chain is Extracellular. An N-linked (GlcNAc...) asparagine glycan is attached at Asn34. Disulfide bonds link Cys37-Cys201 and Cys120-Cys205. The helical transmembrane segment at 48-68 (LILYAVFGFGAVLAVCGNLLV) threads the bilayer. The Cytoplasmic portion of the chain corresponds to 69-83 (MTSILHFRQLHSPAN). Residues 84–104 (FLVASLACADFLVGLTVMPFS) traverse the membrane as a helical segment. Residues 105-121 (TVRSVEGCWYFGDTYCK) lie on the Extracellular side of the membrane. Residues 122 to 143 (FHSCFEGSFCYSSIFHLCFISV) traverse the membrane as a helical segment. Over 144 to 166 (DRYIAVSDPLIYPTRFTASVSGK) the chain is Cytoplasmic. The helical transmembrane segment at 167 to 187 (CITFSWLLSIIYSFSLLYTGA) threads the bilayer. The Extracellular segment spans residues 188–212 (NEAGLEDLVSALTCVGGCQIAVNQS). The N-linked (GlcNAc...) asparagine glycan is linked to Asn210. The helical transmembrane segment at 213-233 (WVFINFLLFLVPTLVMMTVYS) threads the bilayer. Residues 234–274 (KIFLIAKQQAQNIEKMSKQTTRASESYKDRVAKRERKAAKT) lie on the Cytoplasmic side of the membrane. A helical transmembrane segment spans residues 275–295 (LGIAVAAFLLSWLPYFIDSII). The Extracellular portion of the chain corresponds to 296–309 (DAFLGFITPTYVYE). The helical transmembrane segment at 310-333 (ILVWIAYYNSAMNPLIYAFFYPWF) threads the bilayer. Residues 334–358 (RKAIKLIVTGKILRQNSSVTNLFPE) lie on the Cytoplasmic side of the membrane.

Belongs to the G-protein coupled receptor 1 family.

Its subcellular location is the cell membrane. Functionally, olfactory receptor specific for N,N-dimethylalkylamines trace amines. Trace amine compounds are enriched in animal body fluids and act on trace amine-associated receptors (TAARs) to elicit both intraspecific and interspecific innate behaviors. Ligand-binding causes a conformation change that triggers signaling via G(s)-class of G alpha proteins (GNAL or GNAS). In Rattus norvegicus (Rat), this protein is Trace amine-associated receptor 7a.